The primary structure comprises 330 residues: Inactive hydroxysteroid dehydrogenase-like protein 1 (330 aa).

The residue at position 2 (alanine 2) is an N-acetylalanine. Residues 2–82 form a required for mitochondria translocation region; it reads AAVDSFYLLY…SGATDGIGKA (81 aa). Residues 74-80, aspartate 125, and lysine 222 each bind NADP(+); that span reads GATDGIG.

Belongs to the short-chain dehydrogenases/reductases (SDR) family. 17-beta-HSD 3 subfamily. Interacts with STYXL1.

Its subcellular location is the mitochondrion. This is Inactive hydroxysteroid dehydrogenase-like protein 1 (Hsdl1) from Mus musculus (Mouse).